A 20-amino-acid chain; its full sequence is Dihydroorotase-like protein (20 aa).

Belongs to the metallo-dependent hydrolases superfamily. DHOase family. PyrC' subfamily. In terms of assembly, heterododecamer of 6 active PyrB subunits and 6 non-catalytic PyrC' subunits.

Non-functional DHOase. This is Dihydroorotase-like protein (pyrC') from Pseudomonas fluorescens biotype A.